A 434-amino-acid chain; its full sequence is Serine/threonine transporter SstT (434 aa).

9 consecutive transmembrane segments (helical) span residues 14–34 (IVIG…WSFI), 41–61 (FVGA…MSAI), 72–92 (FGTV…AAVA), 135–155 (ALVE…GSGL), 172–192 (TVSA…VGLL), 210–230 (LLML…PFMV), 282–302 (ISIP…VSIM), 316–336 (IFLA…VSGI), and 351–371 (FGIS…IGVV). Positions 413 to 434 (GKGTAEVVTPEKTNEAEESEQV) are disordered.

It belongs to the dicarboxylate/amino acid:cation symporter (DAACS) (TC 2.A.23) family.

The protein localises to the cell membrane. It carries out the reaction L-serine(in) + Na(+)(in) = L-serine(out) + Na(+)(out). The enzyme catalyses L-threonine(in) + Na(+)(in) = L-threonine(out) + Na(+)(out). Its function is as follows. Involved in the import of serine and threonine into the cell, with the concomitant import of sodium (symport system). In Lacticaseibacillus casei (strain BL23) (Lactobacillus casei), this protein is Serine/threonine transporter SstT.